The following is a 419-amino-acid chain: Effector protein BipC (419 aa).

Disordered stretches follow at residues 62–91 and 338–402; these read VAGS…TVSG and LQSG…AKSQ. Composition is skewed to basic and acidic residues over residues 71–91 and 380–392; these read ELAR…TVSG and TRDE…REAA.

It belongs to the SctB/SipC family.

It is found in the secreted. The polypeptide is Effector protein BipC (bipC) (Burkholderia pseudomallei (strain 1106a)).